We begin with the raw amino-acid sequence, 2582 residues long: Chromodomain-helicase-DNA-binding protein 8 (2582 aa).

Disordered regions lie at residues 22 to 111 (DDSF…PVLQ), 136 to 155 (MGVS…PSQS), 253 to 283 (VKGS…TQGE), and 349 to 377 (QKIQ…PLTL). Polar residues-rich tracts occupy residues 42-51 (SLDSLDQMNQ), 94-111 (DYTT…PVLQ), and 141-155 (TGVS…PSQS). Residues 255–267 (GSAPAGNPGAAGP) show a composition bias toward low complexity. Positions 355–372 (PQPPSSQPQPQPQPPPSA) are enriched in pro residues. A Phosphoserine modification is found at Ser434. Disordered regions lie at residues 475 to 585 (RARG…VKRK) and 598 to 617 (DEEE…PILP). Residues 495 to 518 (RPEEEGEKKRRKKSSGERLKEEKP) are compositionally biased toward basic and acidic residues. A phosphoserine mark is found at Ser555 and Ser564. The span at 574 to 585 (QKRRSNRQVKRK) shows a compositional bias: basic residues. A Glycyl lysine isopeptide (Lys-Gly) (interchain with G-Cter in SUMO) cross-link involves residue Lys611. Chromo domains follow at residues 644–711 (AIVD…AQMR) and 726–792 (VEVD…RVNR). The Helicase ATP-binding domain occupies 825–999 (LFNWYNRQNC…FSLLHFLEPS (175 aa)). An ATP-binding site is contributed by 838-845 (DEMGLGKT). A DEAH box motif is present at residues 950 to 953 (DEAH). One can recognise a Helicase C-terminal domain in the interval 1139 to 1290 (LIDKLLPKLK…KAVLQSMSGR (152 aa)). Ser1422 and Ser1426 each carry phosphoserine. The disordered stretch occupies residues 1694–1715 (EDPEYKPLQGPPKDPDDEGDPL). An interaction with FAM124B region spans residues 1791 to 2304 (IARREKQQRW…LVELEVECME (514 aa)). A phosphoserine mark is found at Ser1978 and Ser1980. Residues 1990–2019 (QCTSRTASPSPLRPDAPVEKSPEESTVQVP) are disordered. At Thr1995 the chain carries Phosphothreonine. Residues Ser1997, Ser1999, and Ser2010 each carry the phosphoserine modification. Lys2027 participates in a covalent cross-link: Glycyl lysine isopeptide (Lys-Gly) (interchain with G-Cter in SUMO2). 3 positions are modified to phosphoserine: Ser2040, Ser2070, and Ser2072. Positions 2045 to 2120 (VRVGSSDTAP…RSRPKLYDEE (76 aa)) are disordered. Residues 2065–2074 (EDEDDSDSEL) show a composition bias toward acidic residues. Positions 2077–2096 (SKLSPSSSSSSSSSSSSSST) are enriched in low complexity. The segment covering 2104–2118 (EEKLTADRSRPKLYD) has biased composition (basic and acidic residues). Phosphoserine occurs at positions 2184, 2202, and 2204. The segment at 2187–2233 (VTAGGILGPGNHLLDSPSLTPGEDGDSPVPTPRSGSAASMAEEEASA) is disordered. Thr2206 carries the post-translational modification Phosphothreonine. At Ser2213 the chain carries Phosphoserine. Phosphothreonine is present on Thr2217. Residues 2222-2233 (SAASMAEEEASA) are compositionally biased toward low complexity. Ser2225 is subject to Phosphoserine. Lys2258 participates in a covalent cross-link: Glycyl lysine isopeptide (Lys-Gly) (interchain with G-Cter in SUMO2). Residues 2486–2582 (HVDSSTMLHH…NSDSSEDADD (97 aa)) form a disordered region. Residues 2493 to 2511 (LHHHHHHPHPHHHHHHHPG) show a composition bias toward basic residues. Low complexity predominate over residues 2514-2529 (TTGYPSSPATTTSGTA). Ser2520 carries the phosphoserine modification. Over residues 2537 to 2551 (PEDDDEEEDEEDDDL) the composition is skewed to acidic residues.

Belongs to the SNF2/RAD54 helicase family. CHD8 subfamily. Interacts with CTNNB1 and PIAS3. Component of some MLL1/MLL complex, at least composed of the core components KMT2A/MLL1, ASH2L, HCFC1/HCF1, WDR5 and RBBP5, as well as the facultative components BACC1, CHD8, E2F6, HSP70, INO80C, KANSL1, LAS1L, MAX, MCRS1, MGA, KAT8/MOF, PELP1, PHF20, PRP31, RING2, RUVB1/TIP49A, RUVB2/TIP49B, SENP3, TAF1, TAF4, TAF6, TAF7, TAF9 and TEX10. Interacts with CHD7. Interacts with FAM124B. Interacts with p53/TP53 and histone H1. Interacts with CTCF. Interacts with TLK2. Interacts with HNRNPL in an RNA-dependent manner. Sumoylated.

It localises to the nucleus. The enzyme catalyses ATP + H2O = ADP + phosphate + H(+). ATP-dependent chromatin-remodeling factor, it slides nucleosomes along DNA; nucleosome sliding requires ATP. Acts as a transcription repressor by remodeling chromatin structure and recruiting histone H1 to target genes. Suppresses p53/TP53-mediated apoptosis by recruiting histone H1 and preventing p53/TP53 transactivation activity. Acts as a negative regulator of Wnt signaling pathway by regulating beta-catenin (CTNNB1) activity. Negatively regulates CTNNB1-targeted gene expression by being recruited specifically to the promoter regions of several CTNNB1 responsive genes. Involved in both enhancer blocking and epigenetic remodeling at chromatin boundary via its interaction with CTCF. Acts as a suppressor of STAT3 activity by suppressing the LIF-induced STAT3 transcriptional activity. Also acts as a transcription activator via its interaction with ZNF143 by participating in efficient U6 RNA polymerase III transcription. Regulates alternative splicing of a core group of genes involved in neuronal differentiation, cell cycle and DNA repair. Enables H3K36me3-coupled transcription elongation and co-transcriptional RNA processing likely via interaction with HNRNPL. This chain is Chromodomain-helicase-DNA-binding protein 8, found in Mus musculus (Mouse).